A 185-amino-acid chain; its full sequence is Ovomucoid (185 aa).

3 consecutive Kazal-like domains span residues 1–63 (VEVD…ECRE), 64–128 (AVPM…ECRK), and 131–185 (AAVS…FGKC). 9 disulfides stabilise this stretch: C5/C43, C22/C40, C30/C61, C69/C108, C86/C105, C94/C126, C137/C167, C145/C164, and C153/C185. An N-linked (GlcNAc...) asparagine glycan is attached at N174.

The protein resides in the secreted. This Meleagris gallopavo (Wild turkey) protein is Ovomucoid.